The chain runs to 374 residues: Probable Histone-lysine N-methyltransferase ATXR5 (374 aa).

Residues 1-46 (MAPASITTTTTVARRIVGSRRRTKATSPPDSPPPKKLKPISEILAK) constitute a chloroplast transit peptide. Residues 16 to 38 (IVGSRRRTKATSPPDSPPPKKLK) are disordered. Residues 59 to 109 (DVSCMQCGSGERAEELLLCDKCDKGFHMKCVRPIVVRVPIGSWLCPKCSGQ) form a PHD-type zinc finger. Met-216 is a binding site for substrate. The SET domain maps to 240-362 (PPLLVVFDSR…KGERLYYDYN (123 aa)). Residues 250 to 252 (EGF) and 312 to 316 (RFISG) contribute to the S-adenosyl-L-methionine site. Substrate contacts are provided by residues Arg-334 and 364–365 (YE). Residues Tyr-368 and Val-374 each coordinate S-adenosyl-L-methionine.

This sequence belongs to the class V-like SAM-binding methyltransferase superfamily. In terms of assembly, homodimer.

Its subcellular location is the plastid. It localises to the chloroplast. The protein resides in the nucleus. It catalyses the reaction L-lysyl(27)-[histone H3] + S-adenosyl-L-methionine = N(6)-methyl-L-lysyl(27)-[histone H3] + S-adenosyl-L-homocysteine + H(+). Histone methyltransferase that specifically monomethylates 'Lys-27' of histone H3 (H3K27me1). Has much higher activity on nucleosomes containing H3.1 than H3.3. Involved in the formation of constitutive heterochromatin and the silencing of heterochromatic elements. In Ricinus communis (Castor bean), this protein is Probable Histone-lysine N-methyltransferase ATXR5 (ATXR5).